The following is a 233-amino-acid chain: Thrombin-like enzyme elegaxobin-2 (233 aa).

The 224-residue stretch at 1–224 (VIGGDECNIN…HLDWIKGIIA (224 aa)) folds into the Peptidase S1 domain. Cystine bridges form between cysteine 7–cysteine 138, cysteine 25–cysteine 41, cysteine 73–cysteine 231, cysteine 117–cysteine 185, cysteine 149–cysteine 164, and cysteine 175–cysteine 200. Catalysis depends on histidine 40, which acts as the Charge relay system. N-linked (GlcNAc...) asparagine glycosylation occurs at asparagine 78. Aspartate 85 (charge relay system) is an active-site residue. The Charge relay system role is filled by serine 179.

The protein belongs to the peptidase S1 family. Snake venom subfamily. Monomer. As to expression, expressed by the venom gland.

The protein resides in the secreted. Functionally, thrombin-like snake venom serine protease that clots rabbit fibrinogen. Only the beta chain of fibrinogen (FGB) is cleaved, releasing fibrinopeptide B. Human and bovine fibrinogen are unaffected. Also cleaves Met-Lys and Arg-Ser bonds in heat-denatured bovine plasma kininogen to release Lys-bradykinin. This Protobothrops elegans (Elegant pitviper) protein is Thrombin-like enzyme elegaxobin-2.